A 733-amino-acid polypeptide reads, in one-letter code: DNA-binding protein SATB2 (733 aa).

Positions 1-47 (MERRSESPCLRDSPDRRSGSPDVKGPPPVKVARLEQNGSPMGARGRP) are disordered. Ser20 carries the post-translational modification Phosphoserine. Glycyl lysine isopeptide (Lys-Gly) (interchain with G-Cter in SUMO2) cross-links involve residues Lys24 and Lys30. At Ser39 the chain carries Phosphoserine. Residues 57 to 158 (GLMIPVFCVV…VVTLKIQLQS (102 aa)) enclose the CMP domain. Lys161 participates in a covalent cross-link: Glycyl lysine isopeptide (Lys-Gly) (interchain with G-Cter in SUMO2). One can recognise a CUTL domain in the interval 161-234 (KLEDLPAEQW…WYKKYKKIKV (74 aa)). Lys233 is covalently cross-linked (Glycyl lysine isopeptide (Lys-Gly) (interchain with G-Cter in SUMO)). Lys350 participates in a covalent cross-link: Glycyl lysine isopeptide (Lys-Gly) (interchain with G-Cter in SUMO); alternate. Lys350 participates in a covalent cross-link: Glycyl lysine isopeptide (Lys-Gly) (interchain with G-Cter in SUMO2); alternate. The segment at residues 350–437 (KPEPTNSSVE…ERDRIYQDER (88 aa)) is a DNA-binding region (CUT 1). The interval 435-473 (DERERSMNPNVSMVSSASSSPSSSRTPQAKTSTPTTDLP) is disordered. Residues 441–458 (MNPNVSMVSSASSSPSSS) show a composition bias toward low complexity. The residue at position 454 (Ser454) is a Phosphoserine. The segment covering 459-470 (RTPQAKTSTPTT) has biased composition (polar residues). Thr467 bears the Phosphothreonine mark. Residues 473–560 (PIKVDGANVN…ERDVIYEEES (88 aa)) constitute a DNA-binding region (CUT 2). A Glycyl lysine isopeptide (Lys-Gly) (interchain with G-Cter in SUMO2) cross-link involves residue Lys475. 2 disordered regions span residues 580-617 (QVLH…KPRS) and 691-733 (DEEL…TDQR). Residue Ser594 is modified to Phosphoserine. A DNA-binding region (homeobox) is located at residues 615-674 (PRSRTKISLEALGILQSFIHDVGLYPDQEAIHTLSAQLDLPKHTIIKFFQNQRYHVKHHG). Residues 694 to 708 (LLTESEENDSEEGSE) show a composition bias toward acidic residues. Residues 709 to 733 (EMYKVEAEEENADKSKAAPAETDQR) are compositionally biased toward basic and acidic residues. Residue Lys724 forms a Glycyl lysine isopeptide (Lys-Gly) (interchain with G-Cter in SUMO2) linkage.

This sequence belongs to the CUT homeobox family. In terms of assembly, interacts with PIAS1. Interacts with ATF4 and RUNX2; resulting in enhanced DNA binding and transactivation by these transcription factors. In terms of processing, sumoylated by PIAS1. Sumoylation promotes nuclear localization, but represses transcription factor activity. Expressed in cortical neurons that extend axons across the corpus callosum. Also expressed in branchial arches and in cells of the osteoblast lineage, but not in chondrocytes and osteoclasts.

Its subcellular location is the nucleus matrix. Binds to DNA, at nuclear matrix- or scaffold-associated regions. Thought to recognize the sugar-phosphate structure of double-stranded DNA. Transcription factor controlling nuclear gene expression, by binding to matrix attachment regions (MARs) of DNA and inducing a local chromatin-loop remodeling. Acts as a docking site for several chromatin remodeling enzymes and also by recruiting corepressors (HDACs) or coactivators (HATs) directly to promoters and enhancers. Required for the initiation of the upper-layer neurons (UL1) specific genetic program and for the inactivation of deep-layer neurons (DL) and UL2 specific genes, probably by modulating Bcl11b expression. Repressor of Ctip2 and regulatory determinant of corticocortical connections in the developing cerebral cortex. May play an important role in palate formation. Acts as a molecular node in a transcriptional network regulating skeletal development and osteoblast differentiation. This chain is DNA-binding protein SATB2 (Satb2), found in Mus musculus (Mouse).